Consider the following 110-residue polypeptide: Large ribosomal subunit protein uL22 (110 aa).

Belongs to the universal ribosomal protein uL22 family. In terms of assembly, part of the 50S ribosomal subunit.

Functionally, this protein binds specifically to 23S rRNA; its binding is stimulated by other ribosomal proteins, e.g. L4, L17, and L20. It is important during the early stages of 50S assembly. It makes multiple contacts with different domains of the 23S rRNA in the assembled 50S subunit and ribosome. Its function is as follows. The globular domain of the protein is located near the polypeptide exit tunnel on the outside of the subunit, while an extended beta-hairpin is found that lines the wall of the exit tunnel in the center of the 70S ribosome. The protein is Large ribosomal subunit protein uL22 of Acidovorax ebreus (strain TPSY) (Diaphorobacter sp. (strain TPSY)).